A 213-amino-acid chain; its full sequence is ER lumen protein-retaining receptor erd-2.2 (213 aa).

Residues 1-2 (MN) are Lumenal-facing. Residues 3–21 (IFRISADMSHLLAIIILLL) traverse the membrane as a helical segment. The Cytoplasmic portion of the chain corresponds to 22–35 (KIWKSRSCSGISAR). The helical transmembrane segment at 36–53 (SQILFALVFTARYLDLFS) threads the bilayer. The Lumenal segment spans residues 54-61 (TYISLYNT). The helical transmembrane segment at 62–80 (TMKITFLAATYATVYLMFF) threads the bilayer. At 81–96 (KFRSTYMRESDTFRVE) the chain is on the cytoplasmic side. A helical membrane pass occupies residues 97 to 110 (LLIVPAAILALLIN). Residues 111-117 (HDFAPFE) lie on the Lumenal side of the membrane. Residues 118–137 (LLWTFSIYLEAVAILPQLFL) traverse the membrane as a helical segment. At 138–149 (LQSTGSAEVITA) the chain is on the cytoplasmic side. The chain crosses the membrane as a helical span at residues 150 to 168 (HYLFALGSYRALYIFNWIY). Residues 169–178 (RYYTEDYFDP) lie on the Lumenal side of the membrane. Residues 179-199 (IVVVAGIVQTVLYADFFYLYV) form a helical membrane-spanning segment. Residues 200–213 (TRVVQTRKGMELPI) lie on the Cytoplasmic side of the membrane.

This sequence belongs to the ERD2 family.

Its subcellular location is the endoplasmic reticulum membrane. Functionally, required for the retention of luminal endoplasmic reticulum proteins. Determines the specificity of the luminal ER protein retention system. Also required for normal vesicular traffic through the Golgi. This chain is ER lumen protein-retaining receptor erd-2.2, found in Caenorhabditis elegans.